The primary structure comprises 452 residues: UDP-N-acetylmuramoylalanine--D-glutamate ligase (452 aa).

Position 113–119 (113–119 (GTNGKTT)) interacts with ATP.

Belongs to the MurCDEF family.

Its subcellular location is the cytoplasm. It carries out the reaction UDP-N-acetyl-alpha-D-muramoyl-L-alanine + D-glutamate + ATP = UDP-N-acetyl-alpha-D-muramoyl-L-alanyl-D-glutamate + ADP + phosphate + H(+). It participates in cell wall biogenesis; peptidoglycan biosynthesis. Its function is as follows. Cell wall formation. Catalyzes the addition of glutamate to the nucleotide precursor UDP-N-acetylmuramoyl-L-alanine (UMA). The sequence is that of UDP-N-acetylmuramoylalanine--D-glutamate ligase (murD) from Synechocystis sp. (strain ATCC 27184 / PCC 6803 / Kazusa).